We begin with the raw amino-acid sequence, 111 residues long: Cytochrome c oxidase subunit 6A1, mitochondrial (111 aa).

The N-terminal 26 residues, 1-26 (MASAVLSASRVSRPLGRALPGLRRPM), are a transit peptide targeting the mitochondrion. Residues 27 to 36 (SSGAHGEEGS) are Mitochondrial matrix-facing. Residues 37 to 61 (ARMWKALTYFVALPGVGVSMLNVFL) form a helical membrane-spanning segment. At 62 to 111 (KSRHEEHERPPFVAYPHLRIRTKPFPWGDGNHTLFHNPHVNPLPTGYEDE) the chain is on the mitochondrial intermembrane side.

This sequence belongs to the cytochrome c oxidase subunit 6A family. As to quaternary structure, component of the cytochrome c oxidase (complex IV, CIV), a multisubunit enzyme composed of 14 subunits. The complex is composed of a catalytic core of 3 subunits MT-CO1, MT-CO2 and MT-CO3, encoded in the mitochondrial DNA, and 11 supernumerary subunits COX4I, COX5A, COX5B, COX6A, COX6B, COX6C, COX7A, COX7B, COX7C, COX8 and NDUFA4, which are encoded in the nuclear genome. The complex exists as a monomer or a dimer and forms supercomplexes (SCs) in the inner mitochondrial membrane with NADH-ubiquinone oxidoreductase (complex I, CI) and ubiquinol-cytochrome c oxidoreductase (cytochrome b-c1 complex, complex III, CIII), resulting in different assemblies (supercomplex SCI(1)III(2)IV(1) and megacomplex MCI(2)III(2)IV(2)).

The protein resides in the mitochondrion inner membrane. The protein operates within energy metabolism; oxidative phosphorylation. Component of the cytochrome c oxidase, the last enzyme in the mitochondrial electron transport chain which drives oxidative phosphorylation. The respiratory chain contains 3 multisubunit complexes succinate dehydrogenase (complex II, CII), ubiquinol-cytochrome c oxidoreductase (cytochrome b-c1 complex, complex III, CIII) and cytochrome c oxidase (complex IV, CIV), that cooperate to transfer electrons derived from NADH and succinate to molecular oxygen, creating an electrochemical gradient over the inner membrane that drives transmembrane transport and the ATP synthase. Cytochrome c oxidase is the component of the respiratory chain that catalyzes the reduction of oxygen to water. Electrons originating from reduced cytochrome c in the intermembrane space (IMS) are transferred via the dinuclear copper A center (CU(A)) of subunit 2 and heme A of subunit 1 to the active site in subunit 1, a binuclear center (BNC) formed by heme A3 and copper B (CU(B)). The BNC reduces molecular oxygen to 2 water molecules unsing 4 electrons from cytochrome c in the IMS and 4 protons from the mitochondrial matrix. In Mus musculus (Mouse), this protein is Cytochrome c oxidase subunit 6A1, mitochondrial (Cox6a1).